We begin with the raw amino-acid sequence, 86 residues long: UPF0297 protein CA_C1679 (86 aa).

This sequence belongs to the UPF0297 family.

The sequence is that of UPF0297 protein CA_C1679 from Clostridium acetobutylicum (strain ATCC 824 / DSM 792 / JCM 1419 / IAM 19013 / LMG 5710 / NBRC 13948 / NRRL B-527 / VKM B-1787 / 2291 / W).